A 221-amino-acid chain; its full sequence is Protein Pisl_1005 (221 aa).

An AMMECR1 domain is found at 8 to 201 (EEGAYLVKLA…EKTPGGEIYE (194 aa)).

The protein is Protein Pisl_1005 of Pyrobaculum islandicum (strain DSM 4184 / JCM 9189 / GEO3).